Consider the following 463-residue polypeptide: T-box transcription factor TBX1-A (463 aa).

Disordered stretches follow at residues 39-58 (SPSPGDPYSQHEPHYEPCSA) and 75-104 (GASSSSCASSTPGSGSTGSSSSNKAPVKKN). A compositionally biased stretch (low complexity) spans 75–96 (GASSSSCASSTPGSGSTGSSSS). Residues 119-297 (LWDEFNQLGT…SNPFAKGFRD (179 aa)) constitute a DNA-binding region (T-box). Disordered stretches follow at residues 320–354 (RSRNPVSSPTQNGSDKDGDGRREYERDASGTPLHG) and 377–409 (VPLSTGRPSPPHELRLDPHSQGSEPLHHHPYKY). A compositionally biased stretch (polar residues) spans 323 to 332 (NPVSSPTQNG). Over residues 333 to 347 (SDKDGDGRREYERDA) the composition is skewed to basic and acidic residues. A Nuclear localization signal motif is present at residues 420-431 (KTRPAPYPLPTI).

As to quaternary structure, binds DNA as a dimer. Interacts with dscr6/ripply3.

Its subcellular location is the nucleus. Probable transcriptional regulator involved in developmental processes. Binds to the palindromic T site 5'-TTCACACCTAGGTGTGAA-3' DNA sequence. Induces pre-placodal ectoderm (PPE) gene expression in regions where RIPPLY3 is absent. Plays a role in the formation of the anteroposterior (AP) axis during embryonic development; required to establish the posterolateral border of the pre-placodal ectoderm (PPE) acting downstream of the retinoic acid receptor (RAR) signaling. The polypeptide is T-box transcription factor TBX1-A (tbx1-a) (Xenopus laevis (African clawed frog)).